We begin with the raw amino-acid sequence, 751 residues long: Protein CLMP1 (751 aa).

The span at 1–11 (MGKSGGRKKKS) shows a compositional bias: basic residues. Residues 1–33 (MGKSGGRKKKSGGSNSNSSQVNSSETSGLSKPS) are disordered. A compositionally biased stretch (low complexity) spans 12-28 (GGSNSNSSQVNSSETSG). 3 TPR repeats span residues 51 to 84 (AHEL…IPKS), 89 to 124 (AVFH…QPGF), and 125 to 158 (TRAL…DPNH). In terms of domain architecture, PB1 spans 290–382 (WRPLKFVYDH…GMLRLHVVDV (93 aa)). Residues 386 to 443 (QEPMLLEEEEEEVEEKPVIEEVISSPTESLSETEINTEKTDKEVEKEKASSSEDPETK) form a disordered region. Residues 390–399 (LLEEEEEEVE) are compositionally biased toward acidic residues. The segment covering 409 to 419 (SSPTESLSETE) has biased composition (polar residues). Positions 421 to 443 (NTEKTDKEVEKEKASSSEDPETK) are enriched in basic and acidic residues. TPR repeat units follow at residues 434 to 468 (ASSS…DPDA), 481 to 514 (SEAL…AFFN), and 536 to 570 (EVVA…KPDF). The segment covering 630 to 648 (EQRMDDLKNPNSNKKEEVS) has biased composition (basic and acidic residues). The tract at residues 630 to 663 (EQRMDDLKNPNSNKKEEVSKRRKKQGGDGNEEVS) is disordered.

Interacts with myosin XI-K. Expressed in roots, stems, leaves, apex, flowers and seeds. Detected throughout the petiole in juvenile and young leaves, but restricted to the petiole midvein in older leaves. Expressed in hydathodes, at the base of the trichome, in the vascular cylinder of primary root and lateral root, in emerging lateral root primordia, in pollen and in developing embryos, but not in mature embryos.

It is found in the cytoplasm. Functionally, required for plastid separation and partitioning during cell division. Not involved in plastid constriction or in the organization of cytoplasmic actin cables. Contributes to polar growth of root hairs. This Arabidopsis thaliana (Mouse-ear cress) protein is Protein CLMP1.